The chain runs to 501 residues: Aldehyde dehydrogenase 1A1 (501 aa).

Serine 2 carries the N-acetylserine modification. 2 positions are modified to N6-acetyllysine: lysine 91 and lysine 128. Residues 167–170 (IPWN), 193–196 (KPAE), 226–227 (GP), and 246–247 (GS) contribute to the NAD(+) site. At lysine 252 the chain carries N6-acetyllysine. The active-site Proton acceptor is the glutamate 269. 269–271 (ELG) contacts NAD(+). Residue cysteine 303 is the Nucleophile of the active site. The tract at residues 336–501 (LTPGATQGPQ…VTVKISQKNS (166 aa)) is mediates interaction with PRMT3. Threonine 337 carries the phosphothreonine modification. An NAD(+)-binding site is contributed by 349-353 (EQYDK). N6-acetyllysine is present on residues lysine 353 and lysine 367. 400-402 (EIF) contacts NAD(+). Lysine 410 is subject to N6-acetyllysine. Position 413 is a phosphoserine (serine 413). Residues lysine 419 and lysine 495 each carry the N6-acetyllysine modification.

Belongs to the aldehyde dehydrogenase family. In terms of assembly, homotetramer. Interacts with PRMT3; the interaction is direct, inhibits ALDH1A1 aldehyde dehydrogenase activity and is independent of the methyltransferase activity of PRMT3. In terms of processing, the N-terminus is blocked most probably by acetylation.

The protein localises to the cytoplasm. The protein resides in the cytosol. It localises to the cell projection. It is found in the axon. The enzyme catalyses an aldehyde + NAD(+) + H2O = a carboxylate + NADH + 2 H(+). It catalyses the reaction all-trans-retinal + NAD(+) + H2O = all-trans-retinoate + NADH + 2 H(+). It carries out the reaction 9-cis-retinal + NAD(+) + H2O = 9-cis-retinoate + NADH + 2 H(+). The catalysed reaction is 11-cis-retinal + NAD(+) + H2O = 11-cis-retinoate + NADH + 2 H(+). The enzyme catalyses 13-cis-retinal + NAD(+) + H2O = 13-cis-retinoate + NADH + 2 H(+). It catalyses the reaction 3-deoxyglucosone + NAD(+) + H2O = 2-dehydro-3-deoxy-D-gluconate + NADH + 2 H(+). It carries out the reaction (E)-4-hydroxynon-2-enal + NAD(+) + H2O = (E)-4-hydroxynon-2-enoate + NADH + 2 H(+). The catalysed reaction is malonaldehyde + NAD(+) + H2O = 3-oxopropanoate + NADH + 2 H(+). The enzyme catalyses hexanal + NAD(+) + H2O = hexanoate + NADH + 2 H(+). It catalyses the reaction propanal + NAD(+) + H2O = propanoate + NADH + 2 H(+). It carries out the reaction acetaldehyde + NAD(+) + H2O = acetate + NADH + 2 H(+). The catalysed reaction is benzaldehyde + NAD(+) + H2O = benzoate + NADH + 2 H(+). The enzyme catalyses 4-aminobutanal + NAD(+) + H2O = 4-aminobutanoate + NADH + 2 H(+). It participates in cofactor metabolism; retinol metabolism. Its function is as follows. Cytosolic dehydrogenase that catalyzes the irreversible oxidation of a wide range of aldehydes to their corresponding carboxylic acid. Functions downstream of retinol dehydrogenases and catalyzes the oxidation of retinaldehyde into retinoic acid, the second step in the oxidation of retinol/vitamin A into retinoic acid. This pathway is crucial to control the levels of retinol and retinoic acid, two important molecules which excess can be teratogenic and cytotoxic. Also oxidizes aldehydes resulting from lipid peroxidation like (E)-4-hydroxynon-2-enal/HNE, malonaldehyde and hexanal that form protein adducts and are highly cytotoxic. By participating for instance to the clearance of (E)-4-hydroxynon-2-enal/HNE in the lens epithelium prevents the formation of HNE-protein adducts and lens opacification. Also functions downstream of fructosamine-3-kinase in the fructosamine degradation pathway by catalyzing the oxidation of 3-deoxyglucosone, the carbohydrate product of fructosamine 3-phosphate decomposition, which is itself a potent glycating agent that may react with lysine and arginine side-chains of proteins. Also has an aminobutyraldehyde dehydrogenase activity and is probably part of an alternative pathway for the biosynthesis of GABA/4-aminobutanoate in midbrain, thereby playing a role in GABAergic synaptic transmission. This chain is Aldehyde dehydrogenase 1A1, found in Macaca fascicularis (Crab-eating macaque).